The sequence spans 469 residues: Lipase A (469 aa).

Positions 1–22 are cleaved as a signal peptide; that stretch reads MMFLTQLVSALFLFFLGPISYG. A compositionally biased stretch (pro residues) spans 40–51; sequence PSEDPFYQPPPG. The segment at 40-59 is disordered; the sequence is PSEDPFYQPPPGYEETEPGT. N111 carries an N-linked (GlcNAc...) asparagine glycan. C129 and C304 are oxidised to a cystine. Active-site charge relay system residues include S217, D361, and H393. C377 and C421 are oxidised to a cystine.

This sequence belongs to the AB hydrolase superfamily. Lipase family. Class Lip subfamily. In terms of assembly, monomer.

Its subcellular location is the secreted. The enzyme catalyses a triacylglycerol + H2O = a diacylglycerol + a fatty acid + H(+). In terms of biological role, hydrolyzes triglycerides, with a preference for substrates with short-chain lengths (C4 to C8). The sequence is that of Lipase A from Arthroderma benhamiae (strain ATCC MYA-4681 / CBS 112371) (Trichophyton mentagrophytes).